We begin with the raw amino-acid sequence, 389 residues long: Nicotinate phosphoribosyltransferase (389 aa).

His216 carries the post-translational modification Phosphohistidine; by autocatalysis.

The protein belongs to the NAPRTase family. In terms of processing, transiently phosphorylated on a His residue during the reaction cycle. Phosphorylation strongly increases the affinity for substrates and increases the rate of nicotinate D-ribonucleotide production. Dephosphorylation regenerates the low-affinity form of the enzyme, leading to product release.

It catalyses the reaction nicotinate + 5-phospho-alpha-D-ribose 1-diphosphate + ATP + H2O = nicotinate beta-D-ribonucleotide + ADP + phosphate + diphosphate. It participates in cofactor biosynthesis; NAD(+) biosynthesis; nicotinate D-ribonucleotide from nicotinate: step 1/1. Functionally, catalyzes the synthesis of beta-nicotinate D-ribonucleotide from nicotinate and 5-phospho-D-ribose 1-phosphate at the expense of ATP. This chain is Nicotinate phosphoribosyltransferase, found in Ralstonia pickettii (strain 12J).